Consider the following 154-residue polypeptide: Putative ankyrin repeat protein RBE_1220 (154 aa).

ANK repeat units follow at residues glutamate 78–glutamine 108 and asparagine 113–leucine 142.

In Rickettsia bellii (strain RML369-C), this protein is Putative ankyrin repeat protein RBE_1220.